Reading from the N-terminus, the 494-residue chain is WD repeat-containing protein 37 (494 aa).

The tract at residues 1–38 is disordered; it reads MPTESGSWAAARQTKQKRKSHSLSIKRTNSSEQDRPGL. Residues 22-31 are compositionally biased toward polar residues; that stretch reads SLSIKRTNSS. 2 WD repeats span residues 154–194 and 197–236; these read GHRD…CLIK and GHAG…PTPQ. The disordered stretch occupies residues 236–266; sequence QPTADTSISGEEEVDFSDKDENDGDGDASSD. Positions 245–263 are enriched in acidic residues; that stretch reads GEEEVDFSDKDENDGDGDA. WD repeat units lie at residues 279-318, 321-360, 365-403, 406-445, and 452-493; these read SHQG…LVHS, GHDQ…IHSV, GHTD…SPIA, RTDS…LARL, and GHRR…LLQE.

It localises to the cytoplasm. The protein resides in the nucleus. The sequence is that of WD repeat-containing protein 37 (wdr37) from Xenopus tropicalis (Western clawed frog).